A 144-amino-acid chain; its full sequence is Small ribosomal subunit protein bS6 (144 aa).

Residues 95-144 form a disordered region; it reads ELEEGPSAMMQSKSRDDRPRRGEGDDRPRRDDREDRPRRDREPRRMEGGE. A compositionally biased stretch (basic and acidic residues) spans 107–144; it reads KSRDDRPRRGEGDDRPRRDDREDRPRRDREPRRMEGGE.

The protein belongs to the bacterial ribosomal protein bS6 family.

Binds together with bS18 to 16S ribosomal RNA. In Paramagnetospirillum magneticum (strain ATCC 700264 / AMB-1) (Magnetospirillum magneticum), this protein is Small ribosomal subunit protein bS6.